A 377-amino-acid polypeptide reads, in one-letter code: N5-carboxyaminoimidazole ribonucleotide synthase (377 aa).

ATP is bound by residues R93, K133, 138–144 (GYDGRGQ), 175–178 (EEFV), E183, H206, and 257–258 (NE). The 191-residue stretch at 97–287 (KTLLDHAGVR…QFENHLRAVC (191 aa)) folds into the ATP-grasp domain.

The protein belongs to the PurK/PurT family. As to quaternary structure, homodimer.

The catalysed reaction is 5-amino-1-(5-phospho-beta-D-ribosyl)imidazole + hydrogencarbonate + ATP = 5-carboxyamino-1-(5-phospho-D-ribosyl)imidazole + ADP + phosphate + 2 H(+). It functions in the pathway purine metabolism; IMP biosynthesis via de novo pathway; 5-amino-1-(5-phospho-D-ribosyl)imidazole-4-carboxylate from 5-amino-1-(5-phospho-D-ribosyl)imidazole (N5-CAIR route): step 1/2. Its function is as follows. Catalyzes the ATP-dependent conversion of 5-aminoimidazole ribonucleotide (AIR) and HCO(3)(-) to N5-carboxyaminoimidazole ribonucleotide (N5-CAIR). This is N5-carboxyaminoimidazole ribonucleotide synthase from Vibrio vulnificus (strain YJ016).